Here is a 467-residue protein sequence, read N- to C-terminus: Retinoic acid receptor RXR-alpha (467 aa).

The interval 1 to 61 (MDTKHFLPLD…LHSPISTLSS (61 aa)) is disordered. Residues 1–139 (MDTKHFLPLD…GNMSSFTKHI (139 aa)) form a modulating region. K4 is covalently cross-linked (Glycyl lysine isopeptide (Lys-Gly) (interchain with G-Cter in SUMO2)). 2 positions are modified to phosphoserine: S22 and S28. Over residues 32-55 (PSLHPSLGPGLGSPLGSPGQLHSP) the composition is skewed to low complexity. Phosphoserine; by MAPK8 and MAPK9 occurs at positions 61 and 75. Residues 79-109 (PHSMSVPTTPTLGFETGSPQLNSPMNPVSSS) are disordered. Residues 83 to 109 (SVPTTPTLGFETGSPQLNSPMNPVSSS) are compositionally biased toward polar residues. T87 carries the phosphothreonine; by MAPK8 and MAPK9 modification. A Glycyl lysine isopeptide (Lys-Gly) (interchain with G-Cter in SUMO) cross-link involves residue K113. S134 is modified (phosphoserine). Residues C140 and C143 each contribute to the Zn(2+) site. Residues 140 to 160 (CAICGDRSSGKHYGVYSCEGC) form an NR C4-type zinc finger. The segment at residues 140–205 (CAICGDRSSG…RYQKCLAMGM (66 aa)) is a DNA-binding region (nuclear receptor). At K150 the chain carries N6-acetyllysine. Positions 157 and 160 each coordinate Zn(2+). The interval 165 to 170 (KRTVRK) is nuclear localization signal. Zn(2+) is bound by residues C176, C182, C192, and C195. Residues 176–200 (CRDNKDCLIDKRQRNRCQYCRYQKC) form an NR C4-type zinc finger. The segment at 206 to 229 (KREAVQEERQRGKDRNENEVESTS) is hinge. The span at 211–223 (QEERQRGKDRNEN) shows a compositional bias: basic and acidic residues. The interval 211 to 233 (QEERQRGKDRNENEVESTSSANE) is disordered. The region spanning 232 to 463 (NEDMPVEKIL…TFLMEMLEAP (232 aa)) is the NR LBD domain. S264 is subject to Phosphoserine. S265 carries the post-translational modification Phosphoserine; by MAPK8 and MAPK9. 9-cis-retinoate-binding residues include R321 and A332. The all-trans-retinoate site is built by R321 and A332. The tract at residues 353–373 (RVLTELVSKMRDMQMDKTELG) is required for nuclear export.

Belongs to the nuclear hormone receptor family. NR2 subfamily. As to quaternary structure, homodimer. Heterodimer (via C-terminus) with RARA; required for ligand-dependent retinoic acid receptor transcriptional activity; association with RARA is enhanced by pulsatile shear stress. Heterodimer with PPARA (via the leucine-like zipper in the LBD); the interaction is required for PPARA transcriptional activity. Heterodimerizes with PPARG. Heterodimerizes (via NR LBD) with RARB. Heterodimerizes with NR1H4; the heterodimerization enhances the binding affinity for LXXLL motifs from coactivators. Interacts with NCOA3 and NCOA6 coactivators. Interacts with FAM120B. Interacts with coactivator PELP1, SENP6, SFPQ, DNTTIP2 and RNF8. Interacts with PRMT2. Interacts with ASXL1. Interacts with BHLHE40/DEC1, BHLHE41/DEC2, MED1, NCOR1 and NCOR2. Interacts in a ligand-dependent fashion with MED1 and NCOA1. Interacts with VDR. Interacts with EP300; the interaction is decreased by 9-cis retinoic acid. Heterodimer (via C-terminus) with NR4A1 (DNA-binding domain); the interaction is enhanced by 9-cis retinoic acid. NR4A1 competes with EP300 for interaction with RXRA and thereby attenuates EP300 mediated acetylation of RXRA. In the absence of hormonal ligand, interacts with TACC1. Interacts ith IGFBP3. Post-translationally, phosphorylated on serine and threonine residues mainly in the N-terminal modulating domain. Constitutively phosphorylated on Ser-22 in the presence or absence of ligand. Under stress conditions, hyperphosphorylated by activated JNK on Ser-61, Ser-75, Thr-87 and Ser-265. Phosphorylated on Ser-28, in vitro, by PKA. This phosphorylation is required for repression of cAMP-mediated transcriptional activity of RARA. In terms of processing, ubiquitinated by UBR5, leading to its degradation: UBR5 specifically recognizes and binds ligand-bound RXRA when it is not associated with coactivators (NCOAs). In presence of NCOAs, the UBR5-degron is not accessible, preventing its ubiquitination and degradation. Sumoylation negatively regulates transcriptional activity. Desumoylated specifically by SENP6. Post-translationally, acetylated by EP300; acetylation enhances DNA binding and transcriptional activity. In terms of tissue distribution, expressed in the adrenal gland with main expression in the zona fasciculata and medulla (at protein level). Expressed in aortic endothelial cells, with high expression in the descending thoracic aorta and the outer curvature of the aortic arch, where pulsatory shear stress exists, but very low in the inner curvature of the aortic arch, where oscillatory shear stress prevails (at protein level).

The protein localises to the nucleus. It is found in the cytoplasm. It localises to the mitochondrion. Receptor for retinoic acid that acts as a transcription factor. Forms homo- or heterodimers with retinoic acid receptors (RARs) and binds to target response elements in response to their ligands, all-trans or 9-cis retinoic acid, to regulate gene expression in various biological processes. The RAR/RXR heterodimers bind to the retinoic acid response elements (RARE) composed of tandem 5'-AGGTCA-3' sites known as DR1-DR5 to regulate transcription. The high affinity ligand for retinoid X receptors (RXRs) is 9-cis retinoic acid. In the absence of ligand, the RXR-RAR heterodimers associate with a multiprotein complex containing transcription corepressors that induce histone deacetylation, chromatin condensation and transcriptional suppression. On ligand binding, the corepressors dissociate from the receptors and coactivators are recruited leading to transcriptional activation. Serves as a common heterodimeric partner for a number of nuclear receptors, such as RARA, RARB and PPARA. The RXRA/RARB heterodimer can act as a transcriptional repressor or transcriptional activator, depending on the RARE DNA element context. The RXRA/PPARA heterodimer is required for PPARA transcriptional activity on fatty acid oxidation genes such as ACOX1 and the P450 system genes. Together with RARA, positively regulates microRNA-10a expression, thereby inhibiting the GATA6/VCAM1 signaling response to pulsatile shear stress in vascular endothelial cells. Acts as an enhancer of RARA binding to RARE DNA element. May facilitate the nuclear import of heterodimerization partners such as VDR and NR4A1. Promotes myelin debris phagocytosis and remyelination by macrophages. Plays a role in the attenuation of the innate immune system in response to viral infections, possibly by negatively regulating the transcription of antiviral genes such as type I IFN genes. Involved in the regulation of calcium signaling by repressing ITPR2 gene expression, thereby controlling cellular senescence. This Rattus norvegicus (Rat) protein is Retinoic acid receptor RXR-alpha (Rxra).